The sequence spans 843 residues: Transmembrane protease serine 7 (843 aa).

The Cytoplasmic portion of the chain corresponds to 1–76 (MDKENSDVSA…KVPFWNVQNK (76 aa)). Residues 27–67 (AQKKLPVRRPPLPGRRLPLPGRRPPQRPIGKAKPKKQSKKK) form a disordered region. Positions 56-67 (GKAKPKKQSKKK) are enriched in basic residues. The helical; Signal-anchor for type II membrane protein transmembrane segment at 77–97 (IILFTVFLFILAVIAWTLLWL) threads the bilayer. Over 98–843 (YISKTESKDA…WIHKYVPSLL (746 aa)) the chain is Extracellular. The region spanning 106–234 (DAFYFAGMFR…DSVVLNAGLR (129 aa)) is the SEA domain. 12 disulfides stabilise this stretch: cysteine 247–cysteine 273, cysteine 299–cysteine 322, cysteine 365–cysteine 396, cysteine 484–cysteine 496, cysteine 491–cysteine 509, cysteine 503–cysteine 518, cysteine 525–cysteine 544, cysteine 538–cysteine 553, cysteine 559–cysteine 571, cysteine 566–cysteine 585, cysteine 579–cysteine 594, and cysteine 631–cysteine 647. CUB domains follow at residues 247–360 (CSQY…FEVI) and 365–481 (CENT…YNIS). 3 consecutive LDL-receptor class A domains span residues 483 to 519 (PCPVGSFRCSSGLCVPQAQRCDGVNDCFDESDELFCV), 517 to 554 (FCVSPQPACNTSSFRQHGPLICDGFRDCENGRDEQNCT), and 558 to 595 (PCNNRTFKCGNDICFRKQNAKCDGTVDCPDGSDEEGCT). In terms of domain architecture, Peptidase S1 spans 606–840 (IIGGTDTLEG…FVPWIHKYVP (235 aa)). Residues histidine 646 and aspartate 694 each act as charge relay system in the active site. 2 disulfides stabilise this stretch: cysteine 730–cysteine 796 and cysteine 762–cysteine 775. Serine 790 acts as the Charge relay system in catalysis.

Belongs to the peptidase S1 family. Forms a heterodimer with SERPINA5. N-glycosylated. As to expression, expressed in brain, ovary, testis, salivary gland, trachea and lung.

It is found in the cell membrane. Serine protease which preferentially hydrolyzes peptides with Arg at the P1 position. The polypeptide is Transmembrane protease serine 7 (TMPRSS7) (Homo sapiens (Human)).